Consider the following 448-residue polypeptide: Adenylosuccinate synthetase (448 aa).

GTP-binding positions include 36-42 and 64-66; these read GDEGKGK and GHT. Aspartate 37 (proton acceptor) is an active-site residue. Mg(2+) contacts are provided by aspartate 37 and glycine 64. Residues 37–40, 62–65, threonine 154, arginine 168, asparagine 246, threonine 261, and arginine 325 each bind IMP; these read DEGK and NAGH. The Proton donor role is filled by histidine 65. 321–327 is a binding site for substrate; sequence VTTKRKR. Residues arginine 327, 353-355, and 436-438 each bind GTP; these read KLD and GVG.

The protein belongs to the adenylosuccinate synthetase family. Homodimer. Mg(2+) is required as a cofactor.

Its subcellular location is the cytoplasm. It catalyses the reaction IMP + L-aspartate + GTP = N(6)-(1,2-dicarboxyethyl)-AMP + GDP + phosphate + 2 H(+). It participates in purine metabolism; AMP biosynthesis via de novo pathway; AMP from IMP: step 1/2. Plays an important role in the de novo pathway and in the salvage pathway of purine nucleotide biosynthesis. Catalyzes the first committed step in the biosynthesis of AMP from IMP. In Drosophila persimilis (Fruit fly), this protein is Adenylosuccinate synthetase.